An 84-amino-acid polypeptide reads, in one-letter code: Putative defensin-like protein 63 (84 aa).

A signal peptide spans 1-21; that stretch reads MDIRKTYVIIFFVGILTISFS. Intrachain disulfides connect cysteine 40–cysteine 81, cysteine 44–cysteine 67, cysteine 53–cysteine 79, and cysteine 57–cysteine 80.

This sequence belongs to the DEFL family.

It localises to the secreted. The protein is Putative defensin-like protein 63 of Arabidopsis thaliana (Mouse-ear cress).